The following is a 90-amino-acid chain: Large ribosomal subunit protein bL27 (90 aa).

A disordered region spans residues 1–22 (MAHKKAGGSTRNGRDSNPKMLG).

This sequence belongs to the bacterial ribosomal protein bL27 family.

The chain is Large ribosomal subunit protein bL27 from Coxiella burnetii (strain Dugway 5J108-111).